Reading from the N-terminus, the 379-residue chain is MSEQFRLTRRSMLAGAAVAGALAPVVTSVAHAEGGGIKTNSAATAANIATLERVKVELVKPPFVHAHTQKAEGEPKVVEFKMTIQEKKIVVDDKGTEVHAMTFDGSVPGPMMIVHQDDYVELTLVNPDTNELQHNIDFHSATGALGGGALTVVNPGDTAVLRFKATKAGVFVYHCAPAGMVPWHVTSGMNGAIMVLPRDGLKDHKGHELVYDKVYYVGEQDFYVPKDENGKFKKYESAGEAYPDVLEAMKTLTPTHVVFNGAVGALTGDNALQAKVGDRVLILHSQANRDTRPHLIGGHGDYVWATGKFANPPELDQETWFIPGGAAGAAYYTFQQPGIYAYVNHNLIEAFELGAAGHFKVTGDWNDDLMTAVVSPTSG.

Positions 1–32 form a signal peptide, tat-type signal; it reads MSEQFRLTRRSMLAGAAVAGALAPVVTSVAHA. 2 Plastocyanin-like domains span residues 33–214 and 215–379; these read EGGG…YDKV and YYVG…PTSG. Residues H134, H139, H174, C175, H184, M189, and H345 each coordinate Cu cation.

The protein belongs to the multicopper oxidase family. Homotrimer. The cofactor is Cu(2+). Cu(+) is required as a cofactor. FAD serves as cofactor. Predicted to be exported by the Tat system. The position of the signal peptide cleavage has not been experimentally proven.

The protein localises to the periplasm. The catalysed reaction is nitric oxide + Fe(III)-[cytochrome c] + H2O = Fe(II)-[cytochrome c] + nitrite + 2 H(+). It participates in nitrogen metabolism; nitrate reduction (denitrification); dinitrogen from nitrate: step 2/4. This chain is Copper-containing nitrite reductase (nirU), found in Neorhizobium galegae (Rhizobium galegae).